The following is a 556-amino-acid chain: Glutamine--tRNA ligase (556 aa).

The 'HIGH' region motif lies at P35 to H45. Residues E36–N38 and H42–S48 contribute to the ATP site. Residues D68 and Y213 each contribute to the L-glutamine site. ATP contacts are provided by residues T232 and R262–L263. Residues V269–R273 carry the 'KMSKS' region motif.

This sequence belongs to the class-I aminoacyl-tRNA synthetase family. Monomer.

The protein resides in the cytoplasm. It catalyses the reaction tRNA(Gln) + L-glutamine + ATP = L-glutaminyl-tRNA(Gln) + AMP + diphosphate. The polypeptide is Glutamine--tRNA ligase (Pseudomonas aeruginosa (strain ATCC 15692 / DSM 22644 / CIP 104116 / JCM 14847 / LMG 12228 / 1C / PRS 101 / PAO1)).